We begin with the raw amino-acid sequence, 117 residues long: Anti-sigma F factor antagonist (117 aa).

The STAS domain maps to leucine 3–leucine 113. Serine 58 carries the phosphoserine modification.

Belongs to the anti-sigma-factor antagonist family. Post-translationally, phosphorylated by SpoIIAB on a serine residue.

In the phosphorylated form it could act as an anti-anti-sigma factor that counteracts SpoIIAB and thus releases sigma f from inhibition. The sequence is that of Anti-sigma F factor antagonist (spoIIAA) from Paenibacillus polymyxa (Bacillus polymyxa).